Here is a 372-residue protein sequence, read N- to C-terminus: 4-hydroxy-3-methylbut-2-en-1-yl diphosphate synthase (flavodoxin) (372 aa).

Residues C270, C273, C305, and E312 each coordinate [4Fe-4S] cluster.

This sequence belongs to the IspG family. It depends on [4Fe-4S] cluster as a cofactor.

It carries out the reaction (2E)-4-hydroxy-3-methylbut-2-enyl diphosphate + oxidized [flavodoxin] + H2O + 2 H(+) = 2-C-methyl-D-erythritol 2,4-cyclic diphosphate + reduced [flavodoxin]. It functions in the pathway isoprenoid biosynthesis; isopentenyl diphosphate biosynthesis via DXP pathway; isopentenyl diphosphate from 1-deoxy-D-xylulose 5-phosphate: step 5/6. Converts 2C-methyl-D-erythritol 2,4-cyclodiphosphate (ME-2,4cPP) into 1-hydroxy-2-methyl-2-(E)-butenyl 4-diphosphate. This Aliivibrio fischeri (strain ATCC 700601 / ES114) (Vibrio fischeri) protein is 4-hydroxy-3-methylbut-2-en-1-yl diphosphate synthase (flavodoxin).